Consider the following 99-residue polypeptide: Aspartyl/glutamyl-tRNA(Asn/Gln) amidotransferase subunit C (99 aa).

The protein belongs to the GatC family. As to quaternary structure, heterotrimer of A, B and C subunits.

It carries out the reaction L-glutamyl-tRNA(Gln) + L-glutamine + ATP + H2O = L-glutaminyl-tRNA(Gln) + L-glutamate + ADP + phosphate + H(+). The enzyme catalyses L-aspartyl-tRNA(Asn) + L-glutamine + ATP + H2O = L-asparaginyl-tRNA(Asn) + L-glutamate + ADP + phosphate + 2 H(+). Its function is as follows. Allows the formation of correctly charged Asn-tRNA(Asn) or Gln-tRNA(Gln) through the transamidation of misacylated Asp-tRNA(Asn) or Glu-tRNA(Gln) in organisms which lack either or both of asparaginyl-tRNA or glutaminyl-tRNA synthetases. The reaction takes place in the presence of glutamine and ATP through an activated phospho-Asp-tRNA(Asn) or phospho-Glu-tRNA(Gln). The polypeptide is Aspartyl/glutamyl-tRNA(Asn/Gln) amidotransferase subunit C (Cupriavidus necator (strain ATCC 17699 / DSM 428 / KCTC 22496 / NCIMB 10442 / H16 / Stanier 337) (Ralstonia eutropha)).